The sequence spans 75 residues: Kappa-scoloptoxin(03)-Ssm1d (75 aa).

The first 23 residues, 1-23 (MKLSMAILLVMALIIFTLDKNYS), serve as a signal peptide directing secretion.

Belongs to the scoloptoxin-03 family. Contains 3 disulfide bonds. As to expression, expressed by the venom gland.

It localises to the secreted. In terms of biological role, inhibits voltage-gated potassium channels. This chain is Kappa-scoloptoxin(03)-Ssm1d, found in Scolopendra mutilans (Chinese red-headed centipede).